The primary structure comprises 122 residues: MIASINDTDMDTDDNMSQARRNRRNRPPARPSAQTQMAAVDMLQTINTAASQTAASLLINDITPNKTESLKILSTQSVGARSLLEPMQANASTIKLNRIETVNVLDFLGSVYDNTIQVIVTE.

The interval 1 to 35 (MIASINDTDMDTDDNMSQARRNRRNRPPARPSAQT) is disordered.

Interacts with protein C42; this interaction suppresses C42 'Lys-48'-linked-ubiquitination and subsequent proteasomal degradation. Interacts with proteins P78/83 and E27.

The protein resides in the host nucleus. In terms of biological role, nucleocapsid protein that mediates the translocation of G-actin from the host cytoplasm to the nucleus, which is fundamental to infection. Participates in regulating nuclear actin polymerization as well as the morphogenesis and spatial distribution of viral capsid structures in the host nucleus. Suppresses 'Lys-48'-linked ubiquitination of the viral protein C42, thus forming a regulatory cascade with C42 to control P78/83 availability as an nucleation promoting factor (NPF). In Lepidoptera (butterflies and moths), this protein is Protein Ac102 (Ac102).